The sequence spans 662 residues: Chaperone protein HtpG (662 aa).

Residues 1 to 352 (MSKQTLSFQA…SADLPLNVSR (352 aa)) form an a; substrate-binding region. The segment at 353–594 (ELLQESRDVR…GDGMSTQLAR (242 aa)) is b. The interval 382-402 (HDRHDSPAPQPAEGADRVSDV) is disordered. The tract at residues 595 to 662 (LLKQAGQQAP…YVKRVNALLV (68 aa)) is c.

Belongs to the heat shock protein 90 family. Homodimer.

The protein resides in the cytoplasm. Functionally, molecular chaperone. Has ATPase activity. The sequence is that of Chaperone protein HtpG from Verminephrobacter eiseniae (strain EF01-2).